The sequence spans 528 residues: Cytochrome b5 reductase 4 (528 aa).

Residue M1 is modified to N-acetylmethionine. The segment at 1–29 is disordered; it reads MLNVPSQAFPAPGSQQRVSSQGRSKVPLK. The span at 13–24 shows a compositional bias: low complexity; sequence GSQQRVSSQGRS. The Cytochrome b5 heme-binding domain occupies 54 to 130; it reads LIEVTEEELK…LKECLVGRMA (77 aa). Residues H89 and H112 each contribute to the heme site. The region spanning 172-263 is the CS domain; it reads LSSPSYDWFQ…KESVSWQCLG (92 aa). An FAD-binding FR-type domain is found at 280–392; it reads LYYRRCQLIS…SGPEGDFKVS (113 aa). FAD is bound by residues 372-387 and 399-431; these read DRLQ…GPEG and DLFL…KVKL.

Belongs to the flavoprotein pyridine nucleotide cytochrome reductase family. The cofactor is FAD. Ubiquitously expressed. Isoform 2 is expressed in testis, brain, skeletal muscle and in the male germline.

The protein localises to the endoplasmic reticulum. The catalysed reaction is 2 Fe(III)-[cytochrome b5] + NADH = 2 Fe(II)-[cytochrome b5] + NAD(+) + H(+). In terms of biological role, NADH-cytochrome b5 reductase involved in endoplasmic reticulum stress response pathway. Plays a critical role in protecting pancreatic beta-cells against oxidant stress, possibly by protecting the cell from excess buildup of reactive oxygen species (ROS). This Mus musculus (Mouse) protein is Cytochrome b5 reductase 4 (Cyb5r4).